The primary structure comprises 1320 residues: MDVFSFVKIPKLSSHRTKSSGWPPPSGTWGLNQVPPYGWEMMTNRDGRDYFINHMTQAIPFDDPRFDSCQIIPPAPRKVEMRRDPVLGFGFVAGSEKPVVVRSVTPGGPSEGKLIPGDQIVMINDEAVSAAPRERVIDLVRSCKESILLTVIQPYPSPKSAFISAAKKARLKSNPVKVRFSEEVIINGQVSETVKDNSLLFMPNVLKVYLENGQTKSFRFDCSTSIKDVILTLQEKLSIKGIEHFSLMLEQRIEGAGTKLLLLHEQETLTQVTQRPSSHKMRCLFRISFVPKDPIDLLRRDPVAFEYLYVQSCNDVVQERFGPELKYDIALRLAALQMYIATVTTKQTQKISLKYIEKEWGLETFLPSAVLQSMKEKNIKKALSHLVKANQNLVPPGKKLSALQAKVHYLKFLSDLRLYGGRVFKATLVQAEKRSEVTLLVGPRYGISHVINTKTNLVALLADFSHVNRIEMFTEEESLVRVELHVLDVKPITLLMESSDAMNLACLTAGYYRLLVDSRRSIFNMANKKNAGTQDTGSENKGKHNLLGPDWNCMPQMTTFIGEGEQEAQITYIDSKQKTVEMTDSTLCPKEHRHLYIDNSYSSDELNQPLTQPGDAPCEADYRSLAQRSLLTLSGPDTLKKAQESPRGAKVSFIFGDLALDDGMSPPTIGYERMLEENPEMLEKQRNLYISSANDMKNLDLTPDTDSIQFVANSVYANIGDVKNFEAPEGIEEPLLHDICYAENTDDAEDEDEVSCEEDLVVGEMNQPAILDLSGSSDDIIDLTTLPPPEGDDNEDDFLLRSLNMAIAAPPPGFRDSSDEEDTQSQATSFHEDKEQGSSLQNEEIPVSLIDAVPTSAEGKCEKGLDPAVVSTLEALEALSEEQQKSENSGVAILRAYSPESSSDSGNETNSSEMTEGSELAAAQKQSESLSRMFLATHEGYHPLAEEQTEFPTSKAPSVGLPPKSSHGLAARPATDLPPKVVPSKQILHSDHMEMEPETMETKSVTDYFSKLHMGSVAYSCTSKRKSKLPEGEGKSPLSGNIPGKKQQGTKIAEIEEDTKGKAGTVSSRDNPHLSTFNLERTAFRKDSQRWYVASDGGVVEKSGMEAPAMKVFPRGPGLGNREAEGKEDGTVEGGADDASVLGQGDRFLTDMACVASAKDLDNPEDTDSPSCDHATKLSEAEDNVARLCDYHLAKRMSSLQSEGHFSLQSSQGSSVDTGCGPGSSSSACATPVESPLCPSMGKHMIPDASGKGGRYISPEERAPGHPNHGATFEELHPQTEGMCPRMTVPALHTAINADPLFGTLRDGCHRLPKIKETTV.

The 34-residue stretch at 33 to 66 (QVPPYGWEMMTNRDGRDYFINHMTQAIPFDDPRF) folds into the WW domain. In terms of domain architecture, PDZ spans 78–155 (KVEMRRDPVL…SILLTVIQPY (78 aa)). Residues 204 to 519 (NVLKVYLENG…GYYRLLVDSR (316 aa)) enclose the FERM domain. 6 disordered regions span residues 809–847 (APPP…EIPV), 897–927 (YSPE…QKQS), 949–981 (TEFP…PPKV), 1024–1050 (KRKS…QQGT), 1114–1139 (PRGP…ADDA), and 1204–1274 (GHFS…ATFE). Residues 900 to 913 (ESSSDSGNETNSSE) show a composition bias toward low complexity. The segment covering 1204 to 1217 (GHFSLQSSQGSSVD) has biased composition (polar residues). Positions 1223–1232 (GSSSSACATP) are enriched in low complexity.

As to quaternary structure, interacts (via C-terminus) with DLG1, DLG2, DLG3 and DLG4/PSD95. Interacts (via N-terminus) with ARHGEF7; the interaction is mediated by the PDZ domain. Interacts with GPSM2 (via TPR repeat region). In terms of tissue distribution, expressed in various regions of the brain, including cortex, hippocampus, cerebellum, olfactory bulb and medial habenular nucleus.

It is found in the cell projection. Its subcellular location is the dendritic spine. Positive regulator of dendritic spine morphogenesis and density. Required for the maintenance of excitatory synaptic transmission. Binds phosphatidylinositol 4,5-bisphosphate. The chain is FERM and PDZ domain-containing protein 4 (Frmpd4) from Mus musculus (Mouse).